The following is a 1601-amino-acid chain: Ectopic P granules protein 5 (1601 aa).

The segment at 1–109 (MAELVRPKKP…EAPPIPARNL (109 aa)) is disordered. The span at 15–26 (RPQSDDAPRIPD) shows a compositional bias: basic and acidic residues.

The protein belongs to the EPG5 family.

The protein resides in the cytoplasm. Involved in autophagy. Has a role in the degradation of protein aggregates within autophagosomes. Essential for starvation-induced autotrophy and omegasome development. This Caenorhabditis briggsae protein is Ectopic P granules protein 5 (epg-5).